The primary structure comprises 112 residues: Putative regulatory protein DP2861 (112 aa).

The protein belongs to the RemA family.

The chain is Putative regulatory protein DP2861 from Desulfotalea psychrophila (strain LSv54 / DSM 12343).